A 1491-amino-acid polypeptide reads, in one-letter code: Chromosome partition protein MukB (1491 aa).

34-41 contributes to the ATP binding site; the sequence is GGNGAGKS. Coiled coils occupy residues 302–450, 490–600, 781–806, 836–1109, and 1210–1239; these read LIEQ…LKAE, ARSE…RFES, RAAREQRLELLREERDDVVEQHAKAS, EQAL…DLRT, and VEAIEEMEVELARLTEELTQREQRLAISSD. A flexible hinge region spans residues 667–784; sequence PGGSNDPRLK…AIPLFGRAAR (118 aa). The tract at residues 1059-1080 is disordered; the sequence is QRRRDELQERLHTSRSRKSEYE.

It belongs to the SMC family. MukB subfamily. Homodimerization via its hinge domain. Binds to DNA via its C-terminal region. Interacts, and probably forms a ternary complex, with MukE and MukF via its C-terminal region. The complex formation is stimulated by calcium or magnesium. Interacts with tubulin-related protein FtsZ.

The protein resides in the cytoplasm. It is found in the nucleoid. Functionally, plays a central role in chromosome condensation, segregation and cell cycle progression. Functions as a homodimer, which is essential for chromosome partition. Involved in negative DNA supercoiling in vivo, and by this means organize and compact chromosomes. May achieve or facilitate chromosome segregation by condensation DNA from both sides of a centrally located replisome during cell division. This chain is Chromosome partition protein MukB, found in Vibrio cholerae serotype O1 (strain ATCC 39315 / El Tor Inaba N16961).